We begin with the raw amino-acid sequence, 584 residues long: 2-succinyl-5-enolpyruvyl-6-hydroxy-3-cyclohexene-1-carboxylate synthase (584 aa).

The segment at Thr-563–Val-584 is disordered. Positions Glu-566 to Asp-577 are enriched in basic and acidic residues.

It belongs to the TPP enzyme family. MenD subfamily. As to quaternary structure, homodimer. It depends on Mg(2+) as a cofactor. The cofactor is Mn(2+). Thiamine diphosphate is required as a cofactor.

It catalyses the reaction isochorismate + 2-oxoglutarate + H(+) = 5-enolpyruvoyl-6-hydroxy-2-succinyl-cyclohex-3-ene-1-carboxylate + CO2. It participates in quinol/quinone metabolism; 1,4-dihydroxy-2-naphthoate biosynthesis; 1,4-dihydroxy-2-naphthoate from chorismate: step 2/7. Its pathway is quinol/quinone metabolism; menaquinone biosynthesis. Functionally, catalyzes the thiamine diphosphate-dependent decarboxylation of 2-oxoglutarate and the subsequent addition of the resulting succinic semialdehyde-thiamine pyrophosphate anion to isochorismate to yield 2-succinyl-5-enolpyruvyl-6-hydroxy-3-cyclohexene-1-carboxylate (SEPHCHC). The polypeptide is 2-succinyl-5-enolpyruvyl-6-hydroxy-3-cyclohexene-1-carboxylate synthase (Halobacterium salinarum (strain ATCC 29341 / DSM 671 / R1)).